A 231-amino-acid chain; its full sequence is Protein RhiA (231 aa).

Functionally, may be involved in plant-microbe interaction. This chain is Protein RhiA (rhiA), found in Rhizobium leguminosarum bv. viciae.